Reading from the N-terminus, the 454-residue chain is tRNA modification GTPase MnmE (454 aa).

Arg23, Glu80, and Lys120 together coordinate (6S)-5-formyl-5,6,7,8-tetrahydrofolate. Positions 216–377 constitute a TrmE-type G domain; the sequence is GMKVVIAGRP…LRNHLKQSMG (162 aa). Asn226 is a K(+) binding site. GTP is bound by residues 226 to 231, 245 to 251, 270 to 273, 335 to 338, and 358 to 360; these read NAGKSS, TDIAGTT, DTAG, NKAD, and SAR. Ser230 is a Mg(2+) binding site. Thr245, Ile247, and Thr250 together coordinate K(+). Thr251 is a binding site for Mg(2+). Lys454 serves as a coordination point for (6S)-5-formyl-5,6,7,8-tetrahydrofolate.

It belongs to the TRAFAC class TrmE-Era-EngA-EngB-Septin-like GTPase superfamily. TrmE GTPase family. In terms of assembly, homodimer. Heterotetramer of two MnmE and two MnmG subunits. Requires K(+) as cofactor.

It is found in the cytoplasm. Functionally, exhibits a very high intrinsic GTPase hydrolysis rate. Involved in the addition of a carboxymethylaminomethyl (cmnm) group at the wobble position (U34) of certain tRNAs, forming tRNA-cmnm(5)s(2)U34. The chain is tRNA modification GTPase MnmE from Salmonella typhimurium (strain LT2 / SGSC1412 / ATCC 700720).